The chain runs to 546 residues: Plastidic glucose transporter 4 (546 aa).

Transmembrane regions (helical) follow at residues 105 to 125 (VLPF…HLGV), 148 to 168 (WIVS…GALA), 182 to 202 (IPLA…TMIV), 205 to 225 (LLAG…ISEI), 240 to 260 (LFIC…AANP), 265 to 285 (TMFG…AFSP), 345 to 365 (VVSV…NAVV), 381 to 401 (VAAS…ASSL), 410 to 430 (LLLT…LSFT), 441 to 461 (LAVV…GPVP), 477 to 497 (AVAL…LYFL), and 503 to 523 (FGIS…VLYI).

It belongs to the major facilitator superfamily. Sugar transporter (TC 2.A.1.1) family.

The protein resides in the plastid. It localises to the chloroplast inner membrane. Its function is as follows. May be involved in the efflux of glucose towards the cytosol. The protein is Plastidic glucose transporter 4 of Arabidopsis thaliana (Mouse-ear cress).